The primary structure comprises 192 residues: Imidazoleglycerol-phosphate dehydratase (192 aa).

The protein belongs to the imidazoleglycerol-phosphate dehydratase family.

Its subcellular location is the cytoplasm. It catalyses the reaction D-erythro-1-(imidazol-4-yl)glycerol 3-phosphate = 3-(imidazol-4-yl)-2-oxopropyl phosphate + H2O. The protein operates within amino-acid biosynthesis; L-histidine biosynthesis; L-histidine from 5-phospho-alpha-D-ribose 1-diphosphate: step 6/9. This Vesicomyosocius okutanii subsp. Calyptogena okutanii (strain HA) protein is Imidazoleglycerol-phosphate dehydratase.